Here is a 338-residue protein sequence, read N- to C-terminus: Limbic system-associated membrane protein (338 aa).

The signal sequence occupies residues 1-28 (MVGRVQPDRKQLPLVLLRLLCLLPTGLP). 3 consecutive Ig-like C2-type domains span residues 29-122 (VRSV…PKTS), 132-214 (PKIS…VKVT), and 219-304 (PTIT…ASLV). Asn-40 and Asn-66 each carry an N-linked (GlcNAc...) asparagine glycan. A disulfide bond links Cys-53 and Cys-111. Tyr-94 bears the Phosphotyrosine mark. N-linked (GlcNAc...) asparagine glycosylation is found at Asn-136 and Asn-148. Disulfide bonds link Cys-153–Cys-197 and Cys-239–Cys-290. N-linked (GlcNAc...) asparagine glycans are attached at residues Asn-279, Asn-287, and Asn-300. A lipid anchor (GPI-anchor amidated asparagine; alternate) is attached at Asn-315. Asn-315 is a glycosylation site (N-linked (GlcNAc...) asparagine; alternate). The propeptide at 316 to 338 (GSISLAVPLWLLAASLFCLLSKC) is removed in mature form.

The protein belongs to the immunoglobulin superfamily. IgLON family. In terms of tissue distribution, expressed mostly by neurons comprising limbic-associated cortical and subcortical regions that function in cognition, emotion, memory, and learning.

The protein localises to the cell membrane. Mediates selective neuronal growth and axon targeting. Contributes to the guidance of developing axons and remodeling of mature circuits in the limbic system. Essential for normal growth of the hippocampal mossy fiber projection. The sequence is that of Limbic system-associated membrane protein (Lsamp) from Rattus norvegicus (Rat).